A 234-amino-acid chain; its full sequence is Sugar fermentation stimulation protein homolog (234 aa).

This sequence belongs to the SfsA family.

This chain is Sugar fermentation stimulation protein homolog, found in Shewanella frigidimarina (strain NCIMB 400).